Reading from the N-terminus, the 748-residue chain is Polyribonucleotide nucleotidyltransferase (748 aa).

The Mg(2+) site is built by Asp-522 and Asp-528. In terms of domain architecture, KH spans 588–647; that stretch reads PRVTTIRVPVDKIGEVIGPKGKIINAITEETGAQISIEDDGTVFVGATDGPSAQAAIDRI. The 70-residue stretch at 659–728 folds into the S1 motif domain; the sequence is GERFLGTVVK…KRGKISLVLV (70 aa).

The protein belongs to the polyribonucleotide nucleotidyltransferase family. Requires Mg(2+) as cofactor.

The protein localises to the cytoplasm. It catalyses the reaction RNA(n+1) + phosphate = RNA(n) + a ribonucleoside 5'-diphosphate. Involved in mRNA degradation. Catalyzes the phosphorolysis of single-stranded polyribonucleotides processively in the 3'- to 5'-direction. The chain is Polyribonucleotide nucleotidyltransferase from Mycobacterium avium (strain 104).